The primary structure comprises 67 residues: Major cold shock protein (67 aa).

One can recognise a CSD domain in the interval 4-63 (GTVKWFNAEKGFGFISTENGQDVFAHFSAIQTNGFKTLEEGQKVAFDVEEGQRGPQAVNI).

Homodimer.

The protein localises to the cytoplasm. This is Major cold shock protein (cspA) from Streptococcus pyogenes serotype M3 (strain ATCC BAA-595 / MGAS315).